The following is a 223-amino-acid chain: DnaJ homolog subfamily B member 9 (223 aa).

A signal peptide spans 1 to 23; the sequence is MATPQSIFIFAICILMITELILA. The 65-residue stretch at 26 to 90 folds into the J domain; the sequence is SYYDILGVPK…NRRKEYDTLG (65 aa). Residues 91–223 are divergent targeting domain; it reads HSAFTSGKGQ…VTTYTDCSGQ (133 aa). Ser-133 bears the Phosphoserine mark.

In terms of assembly, interacts with HSPA5/BiP; interaction is direct. Interacts with ERN1/IRE1 (via the luminal region). Interacts with DERL1. In terms of tissue distribution, widely expressed. Expressed at highest level in the liver, placenta and kidney.

Its subcellular location is the endoplasmic reticulum lumen. Its function is as follows. Co-chaperone for Hsp70 protein HSPA5/BiP that acts as a key repressor of the ERN1/IRE1-mediated unfolded protein response (UPR). J domain-containing co-chaperones stimulate the ATPase activity of Hsp70 proteins and are required for efficient substrate recognition by Hsp70 proteins. In the unstressed endoplasmic reticulum, interacts with the luminal region of ERN1/IRE1 and selectively recruits HSPA5/BiP: HSPA5/BiP disrupts the dimerization of the active ERN1/IRE1 luminal region, thereby inactivating ERN1/IRE1. Also involved in endoplasmic reticulum-associated degradation (ERAD) of misfolded proteins. Required for survival of B-cell progenitors and normal antibody production. This is DnaJ homolog subfamily B member 9 (DNAJB9) from Homo sapiens (Human).